The sequence spans 119 residues: NADH-quinone oxidoreductase subunit A (119 aa).

3 consecutive transmembrane segments (helical) span residues 7–27 (FPVL…VSIG), 63–83 (LVAI…PWGV), and 88–108 (IGWP…LGFA).

The protein belongs to the complex I subunit 3 family. As to quaternary structure, NDH-1 is composed of 14 different subunits. Subunits NuoA, H, J, K, L, M, N constitute the membrane sector of the complex.

It localises to the cell inner membrane. It catalyses the reaction a quinone + NADH + 5 H(+)(in) = a quinol + NAD(+) + 4 H(+)(out). NDH-1 shuttles electrons from NADH, via FMN and iron-sulfur (Fe-S) centers, to quinones in the respiratory chain. The immediate electron acceptor for the enzyme in this species is believed to be ubiquinone. Couples the redox reaction to proton translocation (for every two electrons transferred, four hydrogen ions are translocated across the cytoplasmic membrane), and thus conserves the redox energy in a proton gradient. The polypeptide is NADH-quinone oxidoreductase subunit A (Paraburkholderia phytofirmans (strain DSM 17436 / LMG 22146 / PsJN) (Burkholderia phytofirmans)).